The following is a 114-amino-acid chain: MVLPALPAPPVCDSQNECVGWLGVAYSAVVDVIRAAAHEGVYIEPEARGRLDALREWIYYNYYTERAKRRDRRRRSVCHARTWFCFRKYDYVRRSIWHDTTTNTISVVSAHSVQ.

A Nuclear localization signal motif is present at residues 66 to 75 (RAKRRDRRRR).

This sequence belongs to the adenoviridae E4 ORF4 family. Interacts with host BAZ1A/ACF1, host PPP2R2A/PP2a-B55alpha subunit, and host PPP2R5E/PP2a-B'B56 subunit. May interact with host SRC. May be phosphorylated by host SRC kinase.

The protein localises to the host nucleus. The protein resides in the host cytoplasm. Functionally, plays a role in viral alternative pre-mRNA splicing. Activates dephosphorylation by protein phosphatase 2A of host SR proteins and converts their splicing properties. When expressed alone ex vivo, induces p53/TP53-independent apoptosis called cytoplasmic death. May mimic nutrient/growth signals to activate the host mTOR pathway. This chain is Early 4 ORF4 protein, found in Homo sapiens (Human).